Consider the following 78-residue polypeptide: Large ribosomal subunit protein bL28 (78 aa).

Residues 1–25 (MSRVCQVTGKRPTVGNNRSHAKNAT) form a disordered region.

It belongs to the bacterial ribosomal protein bL28 family.

The polypeptide is Large ribosomal subunit protein bL28 (Tolumonas auensis (strain DSM 9187 / NBRC 110442 / TA 4)).